A 243-amino-acid chain; its full sequence is Protein S40-7 (243 aa).

Disordered regions lie at residues 1–68 (MNKN…KSGL) and 107–143 (SSTA…ERLP). The span at 10–20 (SSPSSLATISD) shows a compositional bias: polar residues. Acidic residues predominate over residues 22-32 (ADGELNEDDIF). Polar residues predominate over residues 47–67 (PVSSPAKQQTPARQLQRSKSG).

Belongs to the senescence regulator S40 family.

The protein resides in the cytoplasm. The protein is Protein S40-7 of Arabidopsis thaliana (Mouse-ear cress).